A 329-amino-acid polypeptide reads, in one-letter code: Malate dehydrogenase (329 aa).

12-18 (GAAGQIG) lines the NAD(+) pocket. The substrate site is built by R93 and R99. Residues N106, Q113, and 130 to 132 (VGN) each bind NAD(+). Residues N132 and R166 each coordinate substrate. The Proton acceptor role is filled by H191.

It belongs to the LDH/MDH superfamily. MDH type 2 family.

The catalysed reaction is (S)-malate + NAD(+) = oxaloacetate + NADH + H(+). In terms of biological role, catalyzes the reversible oxidation of malate to oxaloacetate. The polypeptide is Malate dehydrogenase (Aromatoleum aromaticum (strain DSM 19018 / LMG 30748 / EbN1) (Azoarcus sp. (strain EbN1))).